The sequence spans 259 residues: Proteasome subunit beta type-4 (259 aa).

The protein belongs to the peptidase T1B family. In terms of assembly, the 26S proteasome consists of a 20S proteasome core and two 19S regulatory subunits. The 20S proteasome core is composed of 28 subunits that are arranged in four stacked rings, resulting in a barrel-shaped structure. The two end rings are each formed by seven alpha subunits, and the two central rings are each formed by seven beta subunits. The catalytic chamber with the active sites is on the inside of the barrel.

It is found in the cytoplasm. Its subcellular location is the nucleus. Its function is as follows. Non-catalytic component of the proteasome, a multicatalytic proteinase complex which is characterized by its ability to cleave peptides with Arg, Phe, Tyr, Leu, and Glu adjacent to the leaving group at neutral or slightly basic pH. The proteasome has an ATP-dependent proteolytic activity. This chain is Proteasome subunit beta type-4 (psmB4-1), found in Dictyostelium discoideum (Social amoeba).